A 331-amino-acid polypeptide reads, in one-letter code: Ferredoxin--NADP reductase (331 aa).

The FAD site is built by E34, Q42, Y47, V87, F120, D285, and T325.

This sequence belongs to the ferredoxin--NADP reductase type 2 family. In terms of assembly, homodimer. The cofactor is FAD.

It catalyses the reaction 2 reduced [2Fe-2S]-[ferredoxin] + NADP(+) + H(+) = 2 oxidized [2Fe-2S]-[ferredoxin] + NADPH. The protein is Ferredoxin--NADP reductase of Levilactobacillus brevis (strain ATCC 367 / BCRC 12310 / CIP 105137 / JCM 1170 / LMG 11437 / NCIMB 947 / NCTC 947) (Lactobacillus brevis).